Reading from the N-terminus, the 244-residue chain is MICAFLRVVQHAEKLHGSLGRQLLPHFVFTKACFKTQPLRWGLREQKITVQPRTVLRFTQKTFWTQGPDPRKAKEDSTKQVSIRRNQREETGVSMSQKVREAGRDVSYLIVVLFGVGLTGGLLYAIFKELFFSSSPNIIYGKALGKCRTHPEVIGVFGEPLKGYGEMSRRGRRQHVRFSEYVNNGLKRIRVKFYIEGSEPGKQGTVHAEVEENPGSGQFEFRYIFVEVTPTRSIIVEDNRSEQS.

The N-terminal 18 residues, 1-18, are a transit peptide targeting the mitochondrion; that stretch reads MICAFLRVVQHAEKLHGS. Positions 65–96 are disordered; that stretch reads TQGPDPRKAKEDSTKQVSIRRNQREETGVSMS. Basic and acidic residues predominate over residues 69–78; it reads DPRKAKEDST. Residues 107-127 traverse the membrane as a helical segment; it reads SYLIVVLFGVGLTGGLLYAIF.

Belongs to the TIM21 family. As to quaternary structure, component of the TIM23 complex. Component of the MITRAC (mitochondrial translation regulation assembly intermediate of cytochrome c oxidase complex) complex, the core components of this complex being COA3/MITRAC12 and COX14. Interacts with COA3 and MT-CO1/COX1.

It is found in the mitochondrion membrane. Functionally, participates in the translocation of transit peptide-containing proteins across the mitochondrial inner membrane. Also required for assembly of mitochondrial respiratory chain complex I and complex IV as component of the MITRAC (mitochondrial translation regulation assembly intermediate of cytochrome c oxidase complex) complex. Probably shuttles between the presequence translocase and respiratory-chain assembly intermediates in a process that promotes incorporation of early nuclear-encoded subunits into these complexes. This is Mitochondrial import inner membrane translocase subunit Tim21 (Timm21) from Mus musculus (Mouse).